The primary structure comprises 307 residues: Oxygen-dependent coproporphyrinogen-III oxidase (307 aa).

Substrate is bound at residue Ser-99. Residues His-103 and His-113 each contribute to the a divalent metal cation site. His-113 serves as the catalytic Proton donor. Residue 115–117 coordinates substrate; the sequence is NVR. His-152 and His-182 together coordinate a divalent metal cation. The interval 247–282 is important for dimerization; it reads YVEFNLVFDRGTLFGLQSGGRTESILMSMPPVANWR. Position 265–267 (265–267) interacts with substrate; the sequence is GGR.

The protein belongs to the aerobic coproporphyrinogen-III oxidase family. Homodimer. A divalent metal cation is required as a cofactor.

The protein resides in the cytoplasm. The enzyme catalyses coproporphyrinogen III + O2 + 2 H(+) = protoporphyrinogen IX + 2 CO2 + 2 H2O. It participates in porphyrin-containing compound metabolism; protoporphyrin-IX biosynthesis; protoporphyrinogen-IX from coproporphyrinogen-III (O2 route): step 1/1. Functionally, involved in the heme biosynthesis. Catalyzes the aerobic oxidative decarboxylation of propionate groups of rings A and B of coproporphyrinogen-III to yield the vinyl groups in protoporphyrinogen-IX. The chain is Oxygen-dependent coproporphyrinogen-III oxidase from Burkholderia cenocepacia (strain ATCC BAA-245 / DSM 16553 / LMG 16656 / NCTC 13227 / J2315 / CF5610) (Burkholderia cepacia (strain J2315)).